The following is a 223-amino-acid chain: Neurotrophic factor BDNF precursor form (223 aa).

Positions 1–5 are cleaved as a signal peptide; that stretch reads SCMKA. Residues 6–114 constitute a propeptide that is removed on maturation; that stretch reads APMKEVSIRG…AANMSMRVRR (109 aa). Asparagine 107 carries N-linked (GlcNAc...) asparagine glycosylation. Intrachain disulfides connect cysteine 127/cysteine 194 and cysteine 172/cysteine 223.

Belongs to the NGF-beta family.

The protein localises to the secreted. Functionally, promotes the survival of neuronal populations that are all located either in the central nervous system or directly connected to it. In Calabaria reinhardtii (Calabar boa), this protein is Neurotrophic factor BDNF precursor form (BDNF).